A 229-amino-acid chain; its full sequence is PKHD-type hydroxylase OCAR_6723/OCA5_c13470 (229 aa).

The region spanning 78–180 (HIFPPLFNRY…RVASFFWLQS (103 aa)) is the Fe2OG dioxygenase domain. Fe cation is bound by residues His98, Asp100, and His161. Arg171 lines the 2-oxoglutarate pocket.

The cofactor is Fe(2+). L-ascorbate is required as a cofactor.

The chain is PKHD-type hydroxylase OCAR_6723/OCA5_c13470 from Afipia carboxidovorans (strain ATCC 49405 / DSM 1227 / KCTC 32145 / OM5) (Oligotropha carboxidovorans).